The sequence spans 237 residues: MDLLLGIIQGLTEFLPVSSSGHLTLLSHLLKTDLNAYQTAVLHLGTLVSVVLFAFDGIRRSLRSWRIILNLIVSTIPAGVFGVLFEKQIDQLFSSPRFLPLFFSVTALILMFTRYSSSGEKRMENMSFLDALLVGIAQLFALFPGISRSGITVSSLLFMKYRGEDALQYSFLMSIPVVLGAGILGLEKGNVTILAPIFAFLSGLFALYVLSRSVRSGKIWQFSYYCLFVAILSYLVG.

Transmembrane regions (helical) follow at residues 38–58, 65–85, 92–112, 126–146, 166–186, 191–211, and 217–237; these read QTAVLHLGTLVSVVLFAFDGI, WRIILNLIVSTIPAGVFGVLF, LFSSPRFLPLFFSVTALILMF, MSFLDALLVGIAQLFALFPGI, ALQYSFLMSIPVVLGAGILGL, VTILAPIFAFLSGLFALYVLS, and GKIWQFSYYCLFVAILSYLVG.

Belongs to the UppP family.

The protein resides in the cell inner membrane. It catalyses the reaction di-trans,octa-cis-undecaprenyl diphosphate + H2O = di-trans,octa-cis-undecaprenyl phosphate + phosphate + H(+). Functionally, catalyzes the dephosphorylation of undecaprenyl diphosphate (UPP). Confers resistance to bacitracin. The polypeptide is Undecaprenyl-diphosphatase (Thermotoga sp. (strain RQ2)).